Here is a 581-residue protein sequence, read N- to C-terminus: Arginine--tRNA ligase (581 aa).

The 'HIGH' region signature appears at 122–132 (PNVAKPMHVGH).

This sequence belongs to the class-I aminoacyl-tRNA synthetase family. As to quaternary structure, monomer.

It localises to the cytoplasm. It catalyses the reaction tRNA(Arg) + L-arginine + ATP = L-arginyl-tRNA(Arg) + AMP + diphosphate. The chain is Arginine--tRNA ligase from Francisella tularensis subsp. holarctica (strain FTNF002-00 / FTA).